The following is a 500-amino-acid chain: Serine/threonine protein phosphatase 2A 57 kDa regulatory subunit B' kappa isoform (500 aa).

A disordered region spans residues 1–53; sequence MFKQFLSKLPRKSSKSDSGELNRSSSGPVSSPVQRSGTSGGGSGPVRSNSGKR. Over residues 21–37 the composition is skewed to polar residues; the sequence is LNRSSSGPVSSPVQRSG.

It belongs to the phosphatase 2A regulatory subunit B56 family. In terms of assembly, PP2A consists of a common heteromeric enzyme, composed of a catalytic subunit (subunits C), a constant regulatory subunit (subunit A), and a variety of regulatory subunits such as subunits B (the R2/B/PR55/B55, R3/B''/PR72/PR130/PR59 and R5/B'/B56 families).

Its subcellular location is the cytoplasm. Functionally, the B regulatory subunit may modulate substrate selectivity and catalytic activity, and may also direct the localization of the catalytic enzyme to a particular subcellular compartment. The chain is Serine/threonine protein phosphatase 2A 57 kDa regulatory subunit B' kappa isoform (B'KAPPA) from Arabidopsis thaliana (Mouse-ear cress).